The sequence spans 500 residues: NAD(P)H-quinone oxidoreductase chain 4, chloroplastic (500 aa).

A run of 12 helical transmembrane segments spans residues 4–24 (FPWL…ILFI), 37–57 (ICIC…NFQL), 80–100 (LGID…TTLA), 134–154 (LLLF…LLSM), 167–187 (FILY…GMGL), 208–228 (GLEI…PPII), 242–262 (HYST…YGLV), 272–292 (AHSL…IYAA), 330–350 (GAIL…FLAG), 386–406 (LASP…GIIT), 416–436 (ILIT…LLSM), and 462–482 (IFIL…PDFV).

The protein belongs to the complex I subunit 4 family.

It localises to the plastid. The protein localises to the chloroplast thylakoid membrane. The catalysed reaction is a plastoquinone + NADH + (n+1) H(+)(in) = a plastoquinol + NAD(+) + n H(+)(out). It carries out the reaction a plastoquinone + NADPH + (n+1) H(+)(in) = a plastoquinol + NADP(+) + n H(+)(out). This is NAD(P)H-quinone oxidoreductase chain 4, chloroplastic from Amborella trichopoda.